The primary structure comprises 134 residues: MEKSLHLEIVTPDRLVLSEKVDYVGAPGYEGEFGILPNHIPFLSALNIGSLYYKAGGKTHWIFVSGGFAEVSDNKVTVLAESAERAEDIDLERARKAKERAEQRLAQAKEKLDSARAQAALQRAMARMRVRGAA.

It belongs to the ATPase epsilon chain family. In terms of assembly, F-type ATPases have 2 components, CF(1) - the catalytic core - and CF(0) - the membrane proton channel. CF(1) has five subunits: alpha(3), beta(3), gamma(1), delta(1), epsilon(1). CF(0) has three main subunits: a, b and c.

It localises to the cell inner membrane. Produces ATP from ADP in the presence of a proton gradient across the membrane. This Nitratidesulfovibrio vulgaris (strain DSM 19637 / Miyazaki F) (Desulfovibrio vulgaris) protein is ATP synthase epsilon chain.